Reading from the N-terminus, the 338-residue chain is Fructose-1,6-bisphosphatase class 1 (338 aa).

Residues glutamate 94, aspartate 116, leucine 118, and aspartate 119 each coordinate Mg(2+). Substrate is bound by residues 119 to 122, asparagine 210, and lysine 276; that span reads DGSS. Residue glutamate 282 coordinates Mg(2+).

This sequence belongs to the FBPase class 1 family. In terms of assembly, homotetramer. The cofactor is Mg(2+).

The protein resides in the cytoplasm. It catalyses the reaction beta-D-fructose 1,6-bisphosphate + H2O = beta-D-fructose 6-phosphate + phosphate. Its pathway is carbohydrate biosynthesis; gluconeogenesis. The chain is Fructose-1,6-bisphosphatase class 1 from Burkholderia mallei (strain NCTC 10247).